A 651-amino-acid chain; its full sequence is PTS system N-acetylglucosamine-specific EIICBA component (651 aa).

Residues 1-371 (MNILGFFQRL…FNLKTPGRED (371 aa)) form the PTS EIIC type-1 domain. 12 helical membrane-spanning segments follow: residues 16–36 (LPIA…PDLL), 40–60 (FIAQ…AIGV), 70–90 (GSAA…MVTI), 92–112 (PEIN…GAVY), 132–152 (FVPI…GYVW), 165–185 (WIVS…RLLI), 192–212 (VLNT…GTVF), 232–252 (GFFP…YLAA), 264–284 (LLSV…EFLF), 285–305 (LFLA…SLFI), 308–328 (ALGI…VLMY), and 339–359 (MLLV…SAVI). One can recognise a PTS EIIB type-1 domain in the interval 390–472 (TQLATSYIAA…KKVVTRGPVA (83 aa)). Catalysis depends on Cys412, which acts as the Phosphocysteine intermediate; for EIIB activity. Cys412 bears the Phosphocysteine; by EIIA mark. Positions 519–623 (DEAFASKAVG…SMISPVVCSN (105 aa)) constitute a PTS EIIA type-1 domain. 2 residues coordinate Zn(2+): His556 and His571. His571 (tele-phosphohistidine intermediate; for EIIA activity) is an active-site residue. Position 571 is a phosphohistidine; by HPr (His571).

Zn(2+) serves as cofactor.

Its subcellular location is the cell inner membrane. The catalysed reaction is N(pros)-phospho-L-histidyl-[protein] + N-acetyl-D-glucosamine(out) = N-acetyl-D-glucosamine 6-phosphate(in) + L-histidyl-[protein]. The phosphoenolpyruvate-dependent sugar phosphotransferase system (sugar PTS), a major carbohydrate active transport system, catalyzes the phosphorylation of incoming sugar substrates concomitantly with their translocation across the cell membrane. This system is involved in N-acetylglucosamine transport. The sequence is that of PTS system N-acetylglucosamine-specific EIICBA component (nagE) from Klebsiella pneumoniae.